A 307-amino-acid chain; its full sequence is UDP-3-O-acyl-N-acetylglucosamine deacetylase (307 aa).

Positions 78, 241, and 245 each coordinate Zn(2+). Residue histidine 268 is the Proton donor of the active site.

It belongs to the LpxC family. Requires Zn(2+) as cofactor.

The enzyme catalyses a UDP-3-O-[(3R)-3-hydroxyacyl]-N-acetyl-alpha-D-glucosamine + H2O = a UDP-3-O-[(3R)-3-hydroxyacyl]-alpha-D-glucosamine + acetate. The protein operates within glycolipid biosynthesis; lipid IV(A) biosynthesis; lipid IV(A) from (3R)-3-hydroxytetradecanoyl-[acyl-carrier-protein] and UDP-N-acetyl-alpha-D-glucosamine: step 2/6. Functionally, catalyzes the hydrolysis of UDP-3-O-myristoyl-N-acetylglucosamine to form UDP-3-O-myristoylglucosamine and acetate, the committed step in lipid A biosynthesis. The sequence is that of UDP-3-O-acyl-N-acetylglucosamine deacetylase from Paracidovorax citrulli (strain AAC00-1) (Acidovorax citrulli).